The chain runs to 421 residues: Probable 26S proteasome regulatory subunit rpn6 (421 aa).

In terms of domain architecture, PCI spans 221 to 390 (DFKTAYSYFY…GCLIVYDEPQ (170 aa)).

Belongs to the proteasome subunit S9 family. Component of the lid subcomplex of the 19S proteasome regulatory particle complex (also named PA700 complex). The 26S proteasome consists of a 20S proteasome core and two 19S regulatory subunits.

In terms of biological role, component of the lid subcomplex of the 26S proteasome, a multiprotein complex involved in the ATP-dependent degradation of ubiquitinated proteins. In the complex, rpn6 is required for proteasome assembly. This is Probable 26S proteasome regulatory subunit rpn6 (rpn6) from Schizosaccharomyces pombe (strain 972 / ATCC 24843) (Fission yeast).